Consider the following 468-residue polypeptide: Glutamate--tRNA ligase (468 aa).

A 'HIGH' region motif is present at residues 8–18 (PSPTGFLHVGG). Cysteine 97, cysteine 99, cysteine 124, and aspartate 126 together coordinate Zn(2+). The 'KMSKS' region motif lies at 236-240 (KLSKR). Lysine 239 contributes to the ATP binding site.

Belongs to the class-I aminoacyl-tRNA synthetase family. Glutamate--tRNA ligase type 1 subfamily. Monomer. Requires Zn(2+) as cofactor.

It is found in the cytoplasm. It carries out the reaction tRNA(Glu) + L-glutamate + ATP = L-glutamyl-tRNA(Glu) + AMP + diphosphate. In terms of biological role, catalyzes the attachment of glutamate to tRNA(Glu) in a two-step reaction: glutamate is first activated by ATP to form Glu-AMP and then transferred to the acceptor end of tRNA(Glu). In Francisella tularensis subsp. holarctica (strain FTNF002-00 / FTA), this protein is Glutamate--tRNA ligase.